Here is a 547-residue protein sequence, read N- to C-terminus: Threonylcarbamoyladenosine tRNA methylthiotransferase (547 aa).

The segment at 30-51 is disordered; it reads ARKSVVPRARKHKQETGEQMQT. Residues 59–167 form the MTTase N-terminal domain; it reads QKVWLKTWGC…VVEVVDEAIK (109 aa). The [4Fe-4S] cluster site is built by C68, C104, C133, C209, C213, and C216. The Radical SAM core domain occupies 195–426; sequence RKNPLIEIIS…ALFHSYRPYD (232 aa). Residues 426-488 enclose the TRAM domain; sequence DHKMGEQQQV…KHYMKGRPLE (63 aa). A helical transmembrane segment spans residues 527 to 547; the sequence is ILAVVLLLSAVLLALLMEKLL.

The protein belongs to the methylthiotransferase family. CDKAL1 subfamily. Requires [4Fe-4S] cluster as cofactor.

It is found in the endoplasmic reticulum membrane. The catalysed reaction is N(6)-L-threonylcarbamoyladenosine(37) in tRNA + (sulfur carrier)-SH + AH2 + 2 S-adenosyl-L-methionine = 2-methylsulfanyl-N(6)-L-threonylcarbamoyladenosine(37) in tRNA + (sulfur carrier)-H + 5'-deoxyadenosine + L-methionine + A + S-adenosyl-L-homocysteine + 2 H(+). Catalyzes the methylthiolation of N6-threonylcarbamoyladenosine (t(6)A), leading to the formation of 2-methylthio-N6-threonylcarbamoyladenosine (ms(2)t(6)A) at position 37 in tRNAs that read codons beginning with adenine. This chain is Threonylcarbamoyladenosine tRNA methylthiotransferase (cdkal1), found in Danio rerio (Zebrafish).